The primary structure comprises 734 residues: Photosystem I P700 chlorophyll a apoprotein A2 (734 aa).

A run of 8 helical transmembrane segments spans residues 46 to 69, 135 to 158, 175 to 199, 273 to 291, 330 to 353, 369 to 395, 417 to 439, and 517 to 535; these read IFAS…FHVA, LYSG…LHLQ, LNHH…HVAI, MAHH…GHMY, LHIQ…QHMY, ASLY…IFFV, AIIS…LYVH, and FLVH…LILV. Cysteine 559 and cysteine 568 together coordinate [4Fe-4S] cluster. 2 helical membrane passes run 575–596 and 643–665; these read AFYL…YWHW and LSVW…MFLI. Positions 654, 662, and 670 each coordinate chlorophyll a. Position 671 (tryptophan 671) interacts with phylloquinone. Residues 707–727 form a helical membrane-spanning segment; the sequence is LVGLAHFSVGYVLTYAAFVLA.

This sequence belongs to the PsaA/PsaB family. The PsaA/B heterodimer binds the P700 chlorophyll special pair and subsequent electron acceptors. PSI consists of a core antenna complex that captures photons, and an electron transfer chain that converts photonic excitation into a charge separation. The eukaryotic PSI reaction center is composed of at least 11 subunits. P700 is a chlorophyll a/chlorophyll a' dimer, A0 is one or more chlorophyll a, A1 is one or both phylloquinones and FX is a shared 4Fe-4S iron-sulfur center. is required as a cofactor.

It localises to the plastid. It is found in the chloroplast thylakoid membrane. The enzyme catalyses reduced [plastocyanin] + hnu + oxidized [2Fe-2S]-[ferredoxin] = oxidized [plastocyanin] + reduced [2Fe-2S]-[ferredoxin]. Functionally, psaA and PsaB bind P700, the primary electron donor of photosystem I (PSI), as well as the electron acceptors A0, A1 and FX. PSI is a plastocyanin/cytochrome c6-ferredoxin oxidoreductase, converting photonic excitation into a charge separation, which transfers an electron from the donor P700 chlorophyll pair to the spectroscopically characterized acceptors A0, A1, FX, FA and FB in turn. Oxidized P700 is reduced on the lumenal side of the thylakoid membrane by plastocyanin or cytochrome c6. The protein is Photosystem I P700 chlorophyll a apoprotein A2 of Pyropia yezoensis (Susabi-nori).